Consider the following 631-residue polypeptide: Transcription factor dibT (631 aa).

Residues 11 to 38 (CWTCRLRRKRCDSVQPVCGSCQSLEITC) constitute a DNA-binding region (zn(2)-C6 fungal-type). The span at 123 to 144 (SLADSSASTPSTSSGRPTTLRS) shows a compositional bias: low complexity. Disordered regions lie at residues 123–148 (SLAD…SVDR) and 469–488 (GLKD…TSAG).

The protein resides in the nucleus. Transcription factor; part of the gene cluster that mediates the biosynthesis of pestalotiollide B which is part of dibenzodioxocinones, a novel class of inhibitors against cholesterol ester transfer protein (CEPT). Acts as the key transcription factor within the cluster and positively regulates the expression of the cluster genes and the subsequent production of dibenzodioxocinones such as pestalotiollide B, pestalotiollide C, 1',2'-dehydropenicillide, 3'-methoxy-1',2'-dehydropenicillide and 1',2'-epoxy-3',4'-didehydropenicillide. Required for the expression of most PKS genes outside of the dibenzodioxocinones cluster, (43 out of 48 defined PKS genes), and promotes pigmentation of the mycelium and conidia. The chain is Transcription factor dibT from Pestalotiopsis microspora.